The following is a 124-amino-acid chain: Small ribosomal subunit protein uS12 (124 aa).

D89 is subject to 3-methylthioaspartic acid.

The protein belongs to the universal ribosomal protein uS12 family. As to quaternary structure, part of the 30S ribosomal subunit. Contacts proteins S8 and S17. May interact with IF1 in the 30S initiation complex.

Functionally, with S4 and S5 plays an important role in translational accuracy. Its function is as follows. Interacts with and stabilizes bases of the 16S rRNA that are involved in tRNA selection in the A site and with the mRNA backbone. Located at the interface of the 30S and 50S subunits, it traverses the body of the 30S subunit contacting proteins on the other side and probably holding the rRNA structure together. The combined cluster of proteins S8, S12 and S17 appears to hold together the shoulder and platform of the 30S subunit. The chain is Small ribosomal subunit protein uS12 from Proteus mirabilis (strain HI4320).